The primary structure comprises 313 residues: Dimethyladenosine transferase (313 aa).

A disordered region spans residues 1–21; sequence MPKVKSGAIGRRRGRQEQRRE. Residues histidine 37, leucine 39, glycine 64, glutamate 85, aspartate 113, and asparagine 128 each coordinate S-adenosyl-L-methionine.

This sequence belongs to the class I-like SAM-binding methyltransferase superfamily. rRNA adenine N(6)-methyltransferase family. As to quaternary structure, part of the small subunit (SSU) processome, composed of more than 70 proteins and the RNA chaperone small nucleolar RNA (snoRNA) U3.

The protein resides in the nucleus. Its subcellular location is the nucleoplasm. The protein localises to the nucleolus. It carries out the reaction adenosine(1779)/adenosine(1780) in 18S rRNA + 4 S-adenosyl-L-methionine = N(6)-dimethyladenosine(1779)/N(6)-dimethyladenosine(1780) in 18S rRNA + 4 S-adenosyl-L-homocysteine + 4 H(+). Its function is as follows. Specifically dimethylates two adjacent adenosines in the loop of a conserved hairpin near the 3'-end of 18S rRNA in the 40S particle. Involved in the pre-rRNA processing steps leading to small-subunit rRNA production independently of its RNA-modifying catalytic activity. Part of the small subunit (SSU) processome, first precursor of the small eukaryotic ribosomal subunit. During the assembly of the SSU processome in the nucleolus, many ribosome biogenesis factors, an RNA chaperone and ribosomal proteins associate with the nascent pre-rRNA and work in concert to generate RNA folding, modifications, rearrangements and cleavage as well as targeted degradation of pre-ribosomal RNA by the RNA exosome. This is Dimethyladenosine transferase (DIMT1) from Macaca fascicularis (Crab-eating macaque).